Reading from the N-terminus, the 335-residue chain is Aspartate--ammonia ligase (335 aa).

Belongs to the class-II aminoacyl-tRNA synthetase family. AsnA subfamily.

Its subcellular location is the cytoplasm. It catalyses the reaction L-aspartate + NH4(+) + ATP = L-asparagine + AMP + diphosphate + H(+). The protein operates within amino-acid biosynthesis; L-asparagine biosynthesis; L-asparagine from L-aspartate (ammonia route): step 1/1. The chain is Aspartate--ammonia ligase from Pediococcus pentosaceus (strain ATCC 25745 / CCUG 21536 / LMG 10740 / 183-1w).